The following is a 286-amino-acid chain: Transcription factor bHLH137 (286 aa).

A compositionally biased stretch (polar residues) spans 63–84 (SGSEKLANTTKTATTGSSSCDQ). Positions 63–149 (SGSEKLANTT…RGQATDSHSL (87 aa)) are disordered. The region spanning 142 to 192 (QATDSHSLAERVRREKISERMRTLQNLVPGCDKVTGKALMLDEIINYVQTL) is the bHLH domain.

Homodimer.

Its subcellular location is the nucleus. This chain is Transcription factor bHLH137 (BHLH137), found in Arabidopsis thaliana (Mouse-ear cress).